The following is a 487-amino-acid chain: MDLDEAFLYIGEFGCCQKRLTAFLTLLQVYVACQSMLIVLVGAVPEYLIDNEDISASKEEYTKHLHDTNNFTSIVSEWHLIKNEAYKVNLASSLFFAGLLIGNILFGPLSDKLGRRPVYLSGLFFDITFGYCTALAPSYEVFAVSRFFVGIMNGGMALVSFVLTQEYVGKSYWALTGSLTNLIFAVGIAFYALLGFYIRNWRTLAFVANSPGIFFFLLSFLLPESPRWLYSHGYTTEAEGVLQSMAVGNGVERPVVKLKSCPGTSSKSAHSVFDLVKYGVLRWRTILLMYIWYVCSLVYYGLTLNAGELKGNLYLNVALYGLVEVPAFPLCLYFIEKSWSGRRKATAGFLGFAGFACIFTIFLPETNGDLLNPTVLALFGKLSVSAAFNVVYIYTSELYPTVVRNAGLGVCAMACRFGGILSPFIPTMKSLNPSMPFVAFGISGISAGILSLLLPETRNKPIAESIEDLQSPAYQLLSRGNEVLAST.

Residues 22 to 42 (AFLTLLQVYVACQSMLIVLVG) form a helical membrane-spanning segment. N-linked (GlcNAc...) asparagine glycosylation occurs at N70. A run of 11 helical transmembrane segments spans residues 90–110 (LASS…GPLS), 117–137 (PVYL…ALAP), 141–161 (VFAV…LVSF), 178–198 (SLTN…GFYI), 203–223 (TLAF…FLLP), 286–306 (ILLM…TLNA), 315–335 (LNVA…LYFI), 345–365 (ATAG…FLPE), 374–394 (TVLA…VYIY), 406–426 (AGLG…PFIP), and 435–455 (MPFV…LLLP).

Belongs to the major facilitator (TC 2.A.1) superfamily. Organic cation transporter (TC 2.A.1.19) family.

Its subcellular location is the membrane. Its function is as follows. Probably transports organic cations. The protein is Solute carrier family 22 member 15-like (slc22a15b) of Xenopus tropicalis (Western clawed frog).